The chain runs to 398 residues: MTDATAARRNIVILTIAQALGASSPPIVISLGGLVGQKLSSDPALVTLPVSLFNLGLALGTLPAAFFMRQFGRRNAYMLGALVGAAAGVIAAAGIFAASFLIFCLGTLTAGFYASYVQSYRFAATDAATGDMKARAISWVMVGGLVAAIVGPQLVIWTRDTIPDAMFAGSFLSQAVLGLLALPVLFMLRAPKVRKDPNAIHDTGRPLGEILRSPRFILSVAAGVCSYALMTFVMTAAPIAMVGHGHSVDHAALGIQWHVLAMFAPSFFTGKLITRFGKEKITALGLVLIAFSAIIALGGFDVGHFWGALIFLGIGWNFGFIGATAMVTDCHTPAERGKAQGANDFIMFGTVACASFFAGSLLHSSGWETINWLVFPIVALVLVPLILRLKPKGAAAEA.

A run of 12 helical transmembrane segments spans residues 13 to 35 (ILTI…GGLV), 45 to 67 (LVTL…AAFF), 74 to 91 (RNAY…GVIA), 95 to 117 (IFAA…ASYV), 137 to 156 (ISWV…QLVI), 166 to 188 (MFAG…LFML), 220 to 242 (VAAG…IAMV), 252 to 274 (ALGI…KLIT), 281 to 300 (ITAL…LGGF), 305 to 324 (FWGA…IGAT), 345 to 367 (FIMF…SSGW), and 372 to 389 (WLVF…ILRL).

This sequence belongs to the major facilitator superfamily.

Its subcellular location is the cell membrane. Its function is as follows. Transports riboflavin into the cell. The chain is Riboflavin transporter RfnT from Brucella anthropi (strain ATCC 49188 / DSM 6882 / CCUG 24695 / JCM 21032 / LMG 3331 / NBRC 15819 / NCTC 12168 / Alc 37) (Ochrobactrum anthropi).